A 293-amino-acid polypeptide reads, in one-letter code: Small ribosomal subunit biogenesis GTPase RsgA (293 aa).

The region spanning 63-223 (KNQLNRPPIA…VADTPGFSSL (161 aa)) is the CP-type G domain. GTP-binding positions include 112 to 115 (SKTD) and 166 to 174 (GQSGVGKSS). The Zn(2+) site is built by cysteine 247, cysteine 252, histidine 254, and cysteine 260.

This sequence belongs to the TRAFAC class YlqF/YawG GTPase family. RsgA subfamily. In terms of assembly, monomer. Associates with 30S ribosomal subunit, binds 16S rRNA. Zn(2+) is required as a cofactor.

The protein localises to the cytoplasm. In terms of biological role, one of several proteins that assist in the late maturation steps of the functional core of the 30S ribosomal subunit. Helps release RbfA from mature subunits. May play a role in the assembly of ribosomal proteins into the subunit. Circularly permuted GTPase that catalyzes slow GTP hydrolysis, GTPase activity is stimulated by the 30S ribosomal subunit. This chain is Small ribosomal subunit biogenesis GTPase RsgA, found in Shouchella clausii (strain KSM-K16) (Alkalihalobacillus clausii).